Reading from the N-terminus, the 444-residue chain is Argininosuccinate synthase (444 aa).

Residues 17–25 (AFSGGLDTS) and alanine 43 each bind ATP. Tyrosine 99 is a binding site for L-citrulline. Residues glycine 129 and threonine 131 each coordinate ATP. Residues threonine 131, asparagine 135, and aspartate 136 each contribute to the L-aspartate site. Asparagine 135 contributes to the L-citrulline binding site. Aspartate 136 contributes to the ATP binding site. Positions 139 and 192 each coordinate L-citrulline. An ATP-binding site is contributed by aspartate 194. Residues threonine 201, glutamate 203, and glutamate 280 each contribute to the L-citrulline site.

The protein belongs to the argininosuccinate synthase family. Type 2 subfamily. Homotetramer.

It is found in the cytoplasm. It carries out the reaction L-citrulline + L-aspartate + ATP = 2-(N(omega)-L-arginino)succinate + AMP + diphosphate + H(+). The protein operates within amino-acid biosynthesis; L-arginine biosynthesis; L-arginine from L-ornithine and carbamoyl phosphate: step 2/3. This chain is Argininosuccinate synthase, found in Paraburkholderia phymatum (strain DSM 17167 / CIP 108236 / LMG 21445 / STM815) (Burkholderia phymatum).